The chain runs to 116 residues: Large ribosomal subunit protein bL20 (116 aa).

It belongs to the bacterial ribosomal protein bL20 family.

Binds directly to 23S ribosomal RNA and is necessary for the in vitro assembly process of the 50S ribosomal subunit. It is not involved in the protein synthesizing functions of that subunit. This chain is Large ribosomal subunit protein bL20, found in Mycoplasmopsis synoviae (strain 53) (Mycoplasma synoviae).